A 507-amino-acid polypeptide reads, in one-letter code: ATP synthase subunit alpha, chloroplastic (507 aa).

170–177 contacts ATP; it reads GDRQTGKT.

This sequence belongs to the ATPase alpha/beta chains family. In terms of assembly, F-type ATPases have 2 components, CF(1) - the catalytic core - and CF(0) - the membrane proton channel. CF(1) has five subunits: alpha(3), beta(3), gamma(1), delta(1), epsilon(1). CF(0) has four main subunits: a, b, b' and c.

The protein resides in the plastid. Its subcellular location is the chloroplast thylakoid membrane. The enzyme catalyses ATP + H2O + 4 H(+)(in) = ADP + phosphate + 5 H(+)(out). Functionally, produces ATP from ADP in the presence of a proton gradient across the membrane. The alpha chain is a regulatory subunit. The sequence is that of ATP synthase subunit alpha, chloroplastic from Marchantia polymorpha (Common liverwort).